The sequence spans 227 residues: UPF0173 metal-dependent hydrolase BPUM_2573 (227 aa).

Belongs to the UPF0173 family.

This Bacillus pumilus (strain SAFR-032) protein is UPF0173 metal-dependent hydrolase BPUM_2573.